The sequence spans 37 residues: Large ribosomal subunit protein bL36 (37 aa).

It belongs to the bacterial ribosomal protein bL36 family.

This Nitratidesulfovibrio vulgaris (strain DSM 19637 / Miyazaki F) (Desulfovibrio vulgaris) protein is Large ribosomal subunit protein bL36.